Consider the following 201-residue polypeptide: Protein FAR-RED-ELONGATED HYPOCOTYL 1-LIKE (201 aa).

A Nuclear localization sequence (NLS) motif is present at residues 32 to 35 (KKRK). The Nuclear export sequence (NES) motif lies at 43-46 (LLPL).

Belongs to the FHY1 protein family. Homodimer and heterodimer with FHY1. Interacts with PHYA, especially upon far-red (FR) light illumination. Binds to LAF1 and HFR1. Post-translationally, inactivated by rapid reversible PHYA-mediated phosphorylation.

Its subcellular location is the nucleus. It is found in the cytoplasm. Its function is as follows. Can activate transcription. Essential for light-regulated PHYA nuclear accumulation and subsequent PHYA phototropic signaling processes. PHYA-specific signal transducer in response to continuous FR lights. Mediates the association of PHYA with HFR1 and LAF1 in the nucleus in response to FR conditions. Contributes to inhibition of hypocotyl elongation in continuous blue light (B). This is Protein FAR-RED-ELONGATED HYPOCOTYL 1-LIKE from Arabidopsis thaliana (Mouse-ear cress).